A 77-amino-acid polypeptide reads, in one-letter code: UPF0349 protein lwe2340 (77 aa).

Belongs to the UPF0349 family.

The polypeptide is UPF0349 protein lwe2340 (Listeria welshimeri serovar 6b (strain ATCC 35897 / DSM 20650 / CCUG 15529 / CIP 8149 / NCTC 11857 / SLCC 5334 / V8)).